We begin with the raw amino-acid sequence, 250 residues long: MRAVVELLAGARRLVIFTGAGVSAESGIPTFRDALGGLWARYDPAALATPAAFADDPALVWGWYEWRRLKVLGVQPNPAHRAIAALSGRIANTRLVTQNVDDLHERAGSRDVLHLHGSLHAPRCATCAAAYRDALPDSVEPEEGRRIEPPRCPACGGQVRPGVVWFGEALPEAALREAFAAACECDLLLSVGTSGVVQPAARIPGLALEHGASVVHVNPQPVRTRHPREHCLVGPAGEVLPELLRRAFPG.

The Deacetylase sirtuin-type domain maps to 1–250 (MRAVVELLAG…PELLRRAFPG (250 aa)). Residue 19–39 (GAGVSAESGIPTFRDALGGLW) participates in NAD(+) binding. 2 residues coordinate substrate: Y64 and R67. 98–101 (QNVD) contributes to the NAD(+) binding site. Residue H116 is the Proton acceptor of the active site. Positions 124, 127, 152, and 155 each coordinate Zn(2+). Residues 192–194 (GTS), 218–220 (NPQ), and A236 contribute to the NAD(+) site.

Belongs to the sirtuin family. Class III subfamily. Zn(2+) is required as a cofactor.

The protein resides in the cytoplasm. It carries out the reaction N(6)-acetyl-L-lysyl-[protein] + NAD(+) + H2O = 2''-O-acetyl-ADP-D-ribose + nicotinamide + L-lysyl-[protein]. It catalyses the reaction N(6)-succinyl-L-lysyl-[protein] + NAD(+) + H2O = 2''-O-succinyl-ADP-D-ribose + nicotinamide + L-lysyl-[protein]. In terms of biological role, NAD-dependent lysine deacetylase and desuccinylase that specifically removes acetyl and succinyl groups on target proteins. Modulates the activities of several proteins which are inactive in their acylated form. The chain is NAD-dependent protein deacylase 1 from Pseudomonas aeruginosa (strain ATCC 15692 / DSM 22644 / CIP 104116 / JCM 14847 / LMG 12228 / 1C / PRS 101 / PAO1).